The chain runs to 955 residues: 4-alpha-glucanotransferase DPE2 (955 aa).

M1 is modified (N-acetylmethionine). 2 consecutive CBM20 domains span residues 13 to 122 and 157 to 270; these read KSSK…LWQS and SDQD…PWRG. Positions 925–955 are disordered; sequence SGRSVPANVSGEDINKSRGEVIANGSTKPNP.

This sequence belongs to the disproportionating enzyme family.

The protein resides in the cytoplasm. It is found in the cytosol. The catalysed reaction is Transfers a segment of a (1-&gt;4)-alpha-D-glucan to a new position in an acceptor, which may be glucose or a (1-&gt;4)-alpha-D-glucan.. With respect to regulation, inactivated in response to cold stress. Cytosolic alpha-glucanotransferase essential for the cytosolic metabolism of maltose, an intermediate on the pathway by which starch is converted to sucrose in leaves at night. Metabolizes maltose exported from the chloroplast and is specific for beta-maltose. May play a role in freezing tolerance. Temperature drop induces inactivation of DPE2 that leads to rapid accumulation of maltose, a solute that protects cells from freezing damage. This chain is 4-alpha-glucanotransferase DPE2 (DPE2), found in Arabidopsis thaliana (Mouse-ear cress).